Consider the following 195-residue polypeptide: MRRPKSSHVRMEPVAPRSHNTMPMLDQFRSNHPETSKIEGVSSLDTALKVFWNNQREQLGNFAGQTHLPLSRVRKILKSDPEVKKISCDVPALFSKACEYFILEVTLRAWMHTQSCTRETIRRCDIFQAVKNSGTYDFLIDRVPFGPHCVTHQGVQPPAEMILPDMNVPIDMDQIEEENMMEERSVGFDLNCDLQ.

The disordered stretch occupies residues 1–24 (MRRPKSSHVRMEPVAPRSHNTMPM).

The protein belongs to the NFYC/HAP5 subunit family. As to quaternary structure, heterotrimeric transcription factor composed of three components, NF-YA, NF-YB and NF-YC. NF-YB and NF-YC must interact and dimerize for NF-YA association and DNA binding.

It localises to the nucleus. Stimulates the transcription of various genes by recognizing and binding to a CCAAT motif in promoters. The protein is Nuclear transcription factor Y subunit C-10 (NFYC10) of Arabidopsis thaliana (Mouse-ear cress).